A 589-amino-acid chain; its full sequence is UvrABC system protein C (589 aa).

One can recognise a GIY-YIG domain in the interval 13–90 (PNPGCYLFKN…IKTHTPKYNF (78 aa)). Residues 194–229 (KDILKKLHHLMQKASEKMFYEKAQEYRDIIDSIKQT) form the UVR domain.

The protein belongs to the UvrC family. As to quaternary structure, interacts with UvrB in an incision complex.

The protein localises to the cytoplasm. The UvrABC repair system catalyzes the recognition and processing of DNA lesions. UvrC both incises the 5' and 3' sides of the lesion. The N-terminal half is responsible for the 3' incision and the C-terminal half is responsible for the 5' incision. The protein is UvrABC system protein C of Aster yellows witches'-broom phytoplasma (strain AYWB).